A 171-amino-acid polypeptide reads, in one-letter code: S-ribosylhomocysteine lyase (171 aa).

Fe cation-binding residues include histidine 54, histidine 58, and cysteine 128.

Belongs to the LuxS family. In terms of assembly, homodimer. It depends on Fe cation as a cofactor.

The catalysed reaction is S-(5-deoxy-D-ribos-5-yl)-L-homocysteine = (S)-4,5-dihydroxypentane-2,3-dione + L-homocysteine. In terms of biological role, involved in the synthesis of autoinducer 2 (AI-2) which is secreted by bacteria and is used to communicate both the cell density and the metabolic potential of the environment. The regulation of gene expression in response to changes in cell density is called quorum sensing. Catalyzes the transformation of S-ribosylhomocysteine (RHC) to homocysteine (HC) and 4,5-dihydroxy-2,3-pentadione (DPD). The polypeptide is S-ribosylhomocysteine lyase (Escherichia coli (strain 55989 / EAEC)).